The chain runs to 417 residues: D-glycerate 2-kinase (417 aa).

The protein belongs to the glycerate kinase type-1 family. Homodimer. Requires Mg(2+) as cofactor.

The catalysed reaction is (R)-glycerate + ATP = (2R)-2-phosphoglycerate + ADP + H(+). Its function is as follows. Involved in the degradation of serine via 3-hydroxypyruvate. Catalyzes the ATP-dependent phosphorylation of D-glycerate to 2-phosphoglycerate. The polypeptide is D-glycerate 2-kinase (Thermotoga maritima (strain ATCC 43589 / DSM 3109 / JCM 10099 / NBRC 100826 / MSB8)).